We begin with the raw amino-acid sequence, 513 residues long: ATP synthase subunit alpha (513 aa).

169–176 (GDRQTGKT) lines the ATP pocket.

The protein belongs to the ATPase alpha/beta chains family. As to quaternary structure, F-type ATPases have 2 components, CF(1) - the catalytic core - and CF(0) - the membrane proton channel. CF(1) has five subunits: alpha(3), beta(3), gamma(1), delta(1), epsilon(1). CF(0) has three main subunits: a(1), b(2) and c(9-12). The alpha and beta chains form an alternating ring which encloses part of the gamma chain. CF(1) is attached to CF(0) by a central stalk formed by the gamma and epsilon chains, while a peripheral stalk is formed by the delta and b chains.

Its subcellular location is the cell inner membrane. The catalysed reaction is ATP + H2O + 4 H(+)(in) = ADP + phosphate + 5 H(+)(out). Produces ATP from ADP in the presence of a proton gradient across the membrane. The alpha chain is a regulatory subunit. This chain is ATP synthase subunit alpha, found in Pectobacterium carotovorum subsp. carotovorum (strain PC1).